Here is a 169-residue protein sequence, read N- to C-terminus: Peptidyl-prolyl cis-trans isomerase (169 aa).

The PPIase cyclophilin-type domain maps to phenylalanine 5–glutamine 168.

It belongs to the cyclophilin-type PPIase family.

It localises to the cytoplasm. The enzyme catalyses [protein]-peptidylproline (omega=180) = [protein]-peptidylproline (omega=0). Binds cyclosporin A (CsA). CsA mediates some of its effects via an inhibitory action on PPIase. Its function is as follows. PPIases accelerate the folding of proteins. It catalyzes the cis-trans isomerization of proline imidic peptide bonds in oligopeptides. This Unspecified eudicot DB-1992 protein is Peptidyl-prolyl cis-trans isomerase.